The primary structure comprises 82 residues: RNA-binding protein YbxF (82 aa).

It belongs to the eukaryotic ribosomal protein eL8 family.

The sequence is that of RNA-binding protein YbxF from Geobacillus stearothermophilus (Bacillus stearothermophilus).